The sequence spans 85 residues: UPF0181 protein YE1782 (85 aa).

2 disordered regions span residues 1 to 22 (MLAG…RIHQ) and 57 to 85 (DTDF…PYEG). The segment covering 9-21 (SHEEQQEAVERIH) has biased composition (basic and acidic residues). Residues 74-85 (QDADEIEDPYEG) show a composition bias toward acidic residues.

The protein belongs to the UPF0181 family.

This chain is UPF0181 protein YE1782, found in Yersinia enterocolitica serotype O:8 / biotype 1B (strain NCTC 13174 / 8081).